The chain runs to 340 residues: Putative cystathionine beta-lyase (340 aa).

An N6-(pyridoxal phosphate)lysine modification is found at lysine 208.

This sequence belongs to the trans-sulfuration enzymes family. It depends on pyridoxal 5'-phosphate as a cofactor.

It carries out the reaction L,L-cystathionine + H2O = L-homocysteine + pyruvate + NH4(+). The enzyme catalyses an S-substituted L-cysteine + H2O = a thiol + pyruvate + NH4(+). It participates in amino-acid biosynthesis; L-methionine biosynthesis via de novo pathway; L-homocysteine from L-cystathionine: step 1/1. In Saccharomyces cerevisiae (strain ATCC 204508 / S288c) (Baker's yeast), this protein is Putative cystathionine beta-lyase (IRC7).